Consider the following 524-residue polypeptide: Methylmalonyl-CoA carboxyltransferase 12S subunit (524 aa).

The 256-residue stretch at 13–268 folds into the CoA carboxyltransferase N-terminal domain; that stretch reads MEGRVEQLAE…NNTEEASFVN (256 aa). The interval 13–506 is carboxyltransferase; it reads MEGRVEQLAE…RRKIASALEM (494 aa). A CoA carboxyltransferase C-terminal domain is found at 274–506; sequence SPNTELRDIV…RRKIASALEM (233 aa).

As to quaternary structure, homohexamer. Transcarboxylase is composed of three subunits: 1.3S, 5S, and 12S. The core of the enzyme is composed of six 12S subunits. On each side of the core there are three pairs of 5S subunits. Each 5S dimer is attached to the core by two 1.3S subunits. Thus the total number of chains is 30 (6 + 12 + 12).

It catalyses the reaction (S)-methylmalonyl-CoA + pyruvate = propanoyl-CoA + oxaloacetate. The 12S subunit specifically catalyzes the transfer of the carboxyl group of methylmalonyl CoA to the biotin of the 1.3S subunit forming propanoyl-CoA and carboxylated 1.3S-biotin. The chain is Methylmalonyl-CoA carboxyltransferase 12S subunit from Propionibacterium freudenreichii subsp. shermanii.